A 316-amino-acid chain; its full sequence is Beta-ketoacyl-[acyl-carrier-protein] synthase III 1 (316 aa).

Residues cysteine 112 and histidine 243 contribute to the active site. An ACP-binding region spans residues 244 to 248 (QANYR). Asparagine 273 is an active-site residue.

Belongs to the thiolase-like superfamily. FabH family. In terms of assembly, homodimer.

Its subcellular location is the cytoplasm. It carries out the reaction malonyl-[ACP] + acetyl-CoA + H(+) = 3-oxobutanoyl-[ACP] + CO2 + CoA. It functions in the pathway lipid metabolism; fatty acid biosynthesis. In terms of biological role, catalyzes the condensation reaction of fatty acid synthesis by the addition to an acyl acceptor of two carbons from malonyl-ACP. Catalyzes the first condensation reaction which initiates fatty acid synthesis and may therefore play a role in governing the total rate of fatty acid production. Possesses both acetoacetyl-ACP synthase and acetyl transacylase activities. Its substrate specificity determines the biosynthesis of branched-chain and/or straight-chain of fatty acids. This Vibrio vulnificus (strain CMCP6) protein is Beta-ketoacyl-[acyl-carrier-protein] synthase III 1.